The sequence spans 115 residues: Protein Rev (115 aa).

Residues S5 and S8 each carry the phosphoserine; by host CK2 modification. Residues 18 to 26 (LIKFLYQSN) are homomultimerization. The segment at 23-48 (YQSNPPPSSEGTRQARRNRRRRWRER) is disordered. A Nuclear localization signal and RNA-binding (RRE) motif is present at residues 34–50 (TRQARRNRRRRWRERQR). Residues 36–48 (QARRNRRRRWRER) show a composition bias toward basic residues. The short motif at 73-83 (LQLPPQRLTLD) is the Nuclear export signal and binding to XPO1 element. The disordered stretch occupies residues 89 to 115 (GTSGTQGVGSPQILVESPTVLESGTKE). A phosphoserine; by host mark is found at S91 and S98.

It belongs to the HIV-1 REV protein family. In terms of assembly, homomultimer; when bound to the RRE. Multimeric assembly is essential for activity and may involve XPO1. Binds to human KPNB1, XPO1, TNPO1, RANBP5 and IPO7. Interacts with the viral Integrase. Interacts with human KHDRBS1. Interacts with human NAP1; this interaction decreases Rev multimerization and stimulates its activity. Interacts with human DEAD-box helicases DDX3 and DDX24; these interactions may serve for viral RNA export to the cytoplasm and packaging, respectively. Interacts with human PSIP1; this interaction may inhibit HIV-1 DNA integration by promoting dissociation of the Integrase-LEDGF/p75 complex. Asymmetrically arginine dimethylated at one site by host PRMT6. Methylation impairs the RNA-binding activity and export of viral RNA from the nucleus to the cytoplasm. Post-translationally, phosphorylated by protein kinase CK2. Presence of, and maybe binding to the N-terminus of the regulatory beta subunit of CK2 is necessary for CK2-mediated Rev's phosphorylation.

It is found in the host nucleus. The protein resides in the host nucleolus. Its subcellular location is the host cytoplasm. Its function is as follows. Escorts unspliced or incompletely spliced viral pre-mRNAs (late transcripts) out of the nucleus of infected cells. These pre-mRNAs carry a recognition sequence called Rev responsive element (RRE) located in the env gene, that is not present in fully spliced viral mRNAs (early transcripts). This function is essential since most viral proteins are translated from unspliced or partially spliced pre-mRNAs which cannot exit the nucleus by the pathway used by fully processed cellular mRNAs. Rev itself is translated from a fully spliced mRNA that readily exits the nucleus. Rev's nuclear localization signal (NLS) binds directly to KPNB1/Importin beta-1 without previous binding to KPNA1/Importin alpha-1. KPNB1 binds to the GDP bound form of RAN (Ran-GDP) and targets Rev to the nucleus. In the nucleus, the conversion from Ran-GDP to Ran-GTP dissociates Rev from KPNB1 and allows Rev's binding to the RRE in viral pre-mRNAs. Rev multimerization on the RRE via cooperative assembly exposes its nuclear export signal (NES) to the surface. Rev can then form a complex with XPO1/CRM1 and Ran-GTP, leading to nuclear export of the complex. Conversion from Ran-GTP to Ran-GDP mediates dissociation of the Rev/RRE/XPO1/RAN complex, so that Rev can return to the nucleus for a subsequent round of export. Beside KPNB1, also seems to interact with TNPO1/Transportin-1, RANBP5/IPO5 and IPO7/RANBP7 for nuclear import. The nucleoporin-like HRB/RIP is an essential cofactor that probably indirectly interacts with Rev to release HIV RNAs from the perinuclear region to the cytoplasm. In Human immunodeficiency virus type 1 group M subtype B (isolate MN) (HIV-1), this protein is Protein Rev.